A 251-amino-acid chain; its full sequence is Ubiquinone/menaquinone biosynthesis C-methyltransferase UbiE (251 aa).

S-adenosyl-L-methionine-binding positions include threonine 74, aspartate 95, 123-124 (NA), and serine 140.

This sequence belongs to the class I-like SAM-binding methyltransferase superfamily. MenG/UbiE family.

It catalyses the reaction a 2-demethylmenaquinol + S-adenosyl-L-methionine = a menaquinol + S-adenosyl-L-homocysteine + H(+). The catalysed reaction is a 2-methoxy-6-(all-trans-polyprenyl)benzene-1,4-diol + S-adenosyl-L-methionine = a 5-methoxy-2-methyl-3-(all-trans-polyprenyl)benzene-1,4-diol + S-adenosyl-L-homocysteine + H(+). The protein operates within quinol/quinone metabolism; menaquinone biosynthesis; menaquinol from 1,4-dihydroxy-2-naphthoate: step 2/2. Its pathway is cofactor biosynthesis; ubiquinone biosynthesis. Methyltransferase required for the conversion of demethylmenaquinol (DMKH2) to menaquinol (MKH2) and the conversion of 2-polyprenyl-6-methoxy-1,4-benzoquinol (DDMQH2) to 2-polyprenyl-3-methyl-6-methoxy-1,4-benzoquinol (DMQH2). The sequence is that of Ubiquinone/menaquinone biosynthesis C-methyltransferase UbiE from Escherichia coli O1:K1 / APEC.